The chain runs to 250 residues: uncharacterized protein (250 aa).

The segment covering 207–226 (LNDRDAINKSEEARKAREEV) has biased composition (basic and acidic residues). A disordered region spans residues 207-250 (LNDRDAINKSEEARKAREEVFIPSEPSKPSIASKRSSASKSTKS). Over residues 233 to 250 (SKPSIASKRSSASKSTKS) the composition is skewed to low complexity.

It is found in the plastid. The protein resides in the chloroplast. This is an uncharacterized protein from Chlorella vulgaris (Green alga).